An 830-amino-acid polypeptide reads, in one-letter code: WD repeat-containing protein 75 (830 aa).

WD repeat units lie at residues 4–43, 47–86, 90–131, 145–184, 193–231, 237–276, 279–318, 324–362, and 376–423; these read EENI…KVYS, EECV…KLWD, GILI…QLVS, KELS…YFFK, LSSS…RLWR, KKYT…VEWR, TEKN…IIIH, SAVI…QFYS, and QQEY…KLWM. Residue Lys123 forms a Glycyl lysine isopeptide (Lys-Gly) (interchain with G-Cter in SUMO2) linkage. Residue Lys427 forms a Glycyl lysine isopeptide (Lys-Gly) (interchain with G-Cter in SUMO2) linkage. WD repeat units lie at residues 430 to 474, 487 to 525, 529 to 569, and 574 to 611; these read GFIL…KVWI, GWTC…TIWD, WELK…CCWN, and ALEW…FVFK. Position 466 is an N6-acetyllysine (Lys466). 2 positions are modified to phosphoserine: Ser664 and Ser672. A Glycyl lysine isopeptide (Lys-Gly) (interchain with G-Cter in SUMO2) cross-link involves residue Lys676. The tract at residues 763 to 806 is disordered; sequence SAKEIPEDVDMEEEKESEDSDEENDFTEKVQDTSNTGLGEDIIH. A compositionally biased stretch (acidic residues) spans 769–787; sequence EDVDMEEEKESEDSDEEND. Residues Ser779, Ser782, Ser796, and Ser811 each carry the phosphoserine modification.

In terms of assembly, component of the proposed t-UTP subcomplex of the ribosomal small subunit (SSU) processome. SSU processome is composed of more than 70 proteins and the RNA chaperone small nucleolar RNA (snoRNA) U3.

It localises to the nucleus. The protein localises to the nucleolus. Ribosome biogenesis factor. Part of the small subunit (SSU) processome, first precursor of the small eukaryotic ribosomal subunit. During the assembly of the SSU processome in the nucleolus, many ribosome biogenesis factors, an RNA chaperone and ribosomal proteins associate with the nascent pre-rRNA and work in concert to generate RNA folding, modifications, rearrangements and cleavage as well as targeted degradation of pre-ribosomal RNA by the RNA exosome. Involved in nucleolar processing of pre-18S ribosomal RNA. Required for optimal pre-ribosomal RNA transcription by RNA polymerase I. This Homo sapiens (Human) protein is WD repeat-containing protein 75.